Reading from the N-terminus, the 416-residue chain is Phosphoglycerate kinase (416 aa).

Positions 23, 24, 25, 26, 39, 62, 63, 65, 66, 121, 122, 169, and 170 each coordinate (2R)-3-phosphoglycerate. Gly213 is an ADP binding site. Gly213 is a binding site for CDP. AMP contacts are provided by Ala214 and Lys215. Ala214 contributes to the ATP binding site. Ala214 lines the Mg(2+) pocket. A CDP-binding site is contributed by Asp218. Residue Asp218 participates in Mg(2+) binding. Lys219 provides a ligand contact to AMP. Lys219 is a binding site for ATP. Gly237 provides a ligand contact to ADP. Residue Gly237 participates in CDP binding. Gly238 and Gly312 together coordinate AMP. Gly238 and Gly312 together coordinate ATP. Residues Gly337 and Phe342 each coordinate CDP. Phe342 is an ADP binding site. Glu343 serves as a coordination point for AMP. ATP contacts are provided by Glu343, Asp374, and Thr375. Asp374 contributes to the Mg(2+) binding site.

The protein belongs to the phosphoglycerate kinase family. Monomer. It depends on Mg(2+) as a cofactor.

It is found in the cytoplasm. It localises to the mitochondrion. The enzyme catalyses (2R)-3-phosphoglycerate + ATP = (2R)-3-phospho-glyceroyl phosphate + ADP. It functions in the pathway carbohydrate degradation; glycolysis; pyruvate from D-glyceraldehyde 3-phosphate: step 2/5. In terms of biological role, catalyzes one of the two ATP producing reactions in the glycolytic pathway via the reversible conversion of 1,3-diphosphoglycerate to 3-phosphoglycerate. Both L- and D- forms of purine and pyrimidine nucleotides can be used as substrates, but the activity is much lower on pyrimidines. Negatively regulates the biosynthesis of acetyl-CoA from pyruvate in the mitochondrion. The protein is Phosphoglycerate kinase (pgkA) of Agaricus bisporus (White button mushroom).